A 112-amino-acid chain; its full sequence is UPF0102 protein JJD26997_0163 (112 aa).

It belongs to the UPF0102 family.

This Campylobacter jejuni subsp. doylei (strain ATCC BAA-1458 / RM4099 / 269.97) protein is UPF0102 protein JJD26997_0163.